The primary structure comprises 361 residues: Thymidine kinase (361 aa).

Position 17–24 (17–24) interacts with ATP; that stretch reads GPHGVGKS. Glu46 functions as the Proton acceptor in the catalytic mechanism. Substrate contacts are provided by Tyr64 and Gln88. Arg184 serves as a coordination point for ATP. Residue Arg190 coordinates substrate.

It belongs to the herpesviridae thymidine kinase family. As to quaternary structure, homodimer.

The enzyme catalyses thymidine + ATP = dTMP + ADP + H(+). In terms of biological role, catalyzes the transfer of the gamma-phospho group of ATP to thymidine to generate dTMP in the salvage pathway of pyrimidine synthesis. The dTMP serves as a substrate for DNA polymerase during viral DNA replication. Allows the virus to be reactivated and to grow in non-proliferative cells lacking a high concentration of phosphorylated nucleic acid precursors. The protein is Thymidine kinase of Saimiriine herpesvirus 1 (strain MV-5-4-PSL) (SaHV-1).